Reading from the N-terminus, the 143-residue chain is Large ribosomal subunit protein uL15 (143 aa).

The tract at residues 1–52 (MELNTIQPADGAKHYKRRVGRGIGSGLGKTAGRGHKGQKSRSGGFHKVGFEG) is disordered. A compositionally biased stretch (gly residues) spans 21–31 (RGIGSGLGKTA).

It belongs to the universal ribosomal protein uL15 family. As to quaternary structure, part of the 50S ribosomal subunit.

In terms of biological role, binds to the 23S rRNA. The chain is Large ribosomal subunit protein uL15 from Herminiimonas arsenicoxydans.